A 366-amino-acid chain; its full sequence is Envelope glycoprotein M (366 aa).

The Intravirion segment spans residues 1–17 (MMKASRSDTFMLRTWIQ). Residues 18-38 (LLVLFVIMFIMSAILPIAASV) traverse the membrane as a helical segment. The Virion surface portion of the chain corresponds to 39–83 (EGLGFPCYFPNLVDYSLLNLTLRNAAKHLTPTLFLEAPELFVYIT). A helical membrane pass occupies residues 84–104 (WSVLVDLASAIYYVVGALAIL). At 105–113 (QARKTHLTS) the chain is on the intravirion side. Residues 114–134 (MITLQTWINLVGSHTMLFIGI) traverse the membrane as a helical segment. Residues 135-153 (ARMWTLQLFIHVLSYKHVM) are Virion surface-facing. The chain crosses the membrane as a helical span at residues 154 to 174 (LAAFIYFLHFCLSYMHTLSLV). Residues 175-209 (SRNSPKWSVLLMEQHIPKQSLLSTILDYGKPLCVN) are Intravirion-facing. A helical transmembrane segment spans residues 210–230 (MYLSLLALEMLVFSLGFMMAI). Residues 231–235 (GNSFY) are Virion surface-facing. Residues 236–256 (ILVSDTVLASINLYFVLTTFW) traverse the membrane as a helical segment. The Intravirion segment spans residues 257-269 (YMMTEMFLQDYLK). Residues 270–290 (LQFGFYLGVFSGSLILLLPVL) form a helical membrane-spanning segment. Residues 291–304 (RYEAVFVSANLHKT) lie on the Virion surface side of the membrane. Residues 305–325 (VAVNIAMIPAMCVIAMMFRLF) form a helical membrane-spanning segment. The Intravirion segment spans residues 326 to 366 (RYSQQVRKPENSYTPLPKRFKKRRQKQDQQLIMVETSDEEL).

The protein belongs to the herpesviridae glycoprotein M family. Interacts (via N-terminus) with gN (via N-terminus). The gM-gN heterodimer forms the gCII complex.

Its subcellular location is the virion membrane. It is found in the host Golgi apparatus. It localises to the host trans-Golgi network. The protein localises to the host endosome membrane. The protein resides in the host nucleus inner membrane. In terms of biological role, envelope glycoprotein important for virion assembly and egress. Plays a role in the correct incorporation of gH-gL into virion membrane. Directs the glycoprotein N (gN) to the host trans-Golgi network. This is Envelope glycoprotein M from Saimiri sciureus (Common squirrel monkey).